The primary structure comprises 61 residues: Protein translocase subunit SecE (61 aa).

The helical transmembrane segment at 38–58 threads the bilayer; that stretch reads GIGMILIGTIGMIIRIIGYLV.

This sequence belongs to the SecE/SEC61-gamma family. Component of the Sec protein translocase complex. Heterotrimer consisting of SecY (alpha), SecG (beta) and SecE (gamma) subunits. The heterotrimers can form oligomers, although 1 heterotrimer is thought to be able to translocate proteins. Interacts with the ribosome. May interact with SecDF, and other proteins may be involved.

The protein localises to the cell membrane. Its function is as follows. Essential subunit of the Sec protein translocation channel SecYEG. Clamps together the 2 halves of SecY. May contact the channel plug during translocation. The polypeptide is Protein translocase subunit SecE (Thermococcus kodakarensis (strain ATCC BAA-918 / JCM 12380 / KOD1) (Pyrococcus kodakaraensis (strain KOD1))).